The chain runs to 109 residues: Prefoldin subunit 1 (109 aa).

The residue at position 2 (serine 2) is an N-acetylserine.

This sequence belongs to the prefoldin subunit beta family. As to quaternary structure, heterohexamer of two PFD-alpha type and four PFD-beta type subunits.

The protein resides in the cytoplasm. In terms of biological role, binds specifically to cytosolic chaperonin (c-CPN) and transfers target proteins to it. Binds to nascent polypeptide chain and promotes folding in an environment in which there are many competing pathways for nonnative proteins. In Saccharomyces cerevisiae (strain ATCC 204508 / S288c) (Baker's yeast), this protein is Prefoldin subunit 1 (PFD1).